The sequence spans 372 residues: Transaldolase 2 (372 aa).

Lys-140 functions as the Schiff-base intermediate with substrate in the catalytic mechanism.

The protein belongs to the transaldolase family. Type 2 subfamily.

The protein localises to the cytoplasm. The enzyme catalyses D-sedoheptulose 7-phosphate + D-glyceraldehyde 3-phosphate = D-erythrose 4-phosphate + beta-D-fructose 6-phosphate. It participates in carbohydrate degradation; pentose phosphate pathway; D-glyceraldehyde 3-phosphate and beta-D-fructose 6-phosphate from D-ribose 5-phosphate and D-xylulose 5-phosphate (non-oxidative stage): step 2/3. Its function is as follows. Transaldolase is important for the balance of metabolites in the pentose-phosphate pathway. This chain is Transaldolase 2, found in Streptomyces avermitilis (strain ATCC 31267 / DSM 46492 / JCM 5070 / NBRC 14893 / NCIMB 12804 / NRRL 8165 / MA-4680).